A 185-amino-acid chain; its full sequence is Prenylated Rab acceptor protein 1 (185 aa).

Topologically, residues methionine 1–tyrosine 78 are cytoplasmic. The segment at alanine 30–phenylalanine 54 is required for interaction with prenylated RAB3A and VAMP2. The next 2 membrane-spanning stretches (helical) occupy residues valine 79 to proline 94 and methionine 95 to leucine 112. At arginine 113–glutamine 131 the chain is on the cytoplasmic side. Transmembrane regions (helical) follow at residues tyrosine 132 to alanine 148 and glycine 149 to serine 165. The segment at serine 165–valine 185 is required for interaction with GDI1. At histidine 166 to valine 185 the chain is on the cytoplasmic side. Residues valine 175–valine 185 are required for interaction with prenylated RAB3A and VAMP2. A homodimerization region spans residues valine 175 to valine 185.

The protein belongs to the PRA1 family. In terms of assembly, homodimer. Interacts with VAMP2 (synaptobrevin-2), prenylated Rab proteins, GDI1, NDRG1 and PCLO.

Its subcellular location is the cell membrane. It is found in the cytoplasm. The protein resides in the golgi apparatus. The protein localises to the cytoplasmic vesicle. It localises to the secretory vesicle. Its subcellular location is the synaptic vesicle. In terms of biological role, general Rab protein regulator required for vesicle formation from the Golgi complex. May control vesicle docking and fusion by mediating the action of Rab GTPases to the SNARE complexes. In addition it inhibits the removal of Rab GTPases from the membrane by GDI1. The polypeptide is Prenylated Rab acceptor protein 1 (RABAC1) (Bos taurus (Bovine)).